A 237-amino-acid chain; its full sequence is Transcriptional regulatory protein YvrH (237 aa).

Residues Ser5–Leu119 form the Response regulatory domain. The residue at position 55 (Asp55) is a 4-aspartylphosphate. A DNA-binding region (ompR/PhoB-type) is located at residues Asn131–Pro230.

Phosphorylated by YvrG.

Its subcellular location is the cytoplasm. Functionally, member of the two-component regulatory system YvrG/YvrH that positively regulates 7 transcriptional units (wprA, wapA-yxxG, dltABCDE, sunA, sunT-bdbA-yolJ-bdbB, sigO-rsoA, and sigX-rsiX), and negatively regulates the lytABC operon. The polypeptide is Transcriptional regulatory protein YvrH (yvrH) (Bacillus subtilis (strain 168)).